Reading from the N-terminus, the 80-residue chain is Serine palmitoyltransferase small subunit A-A (80 aa).

Topologically, residues 1-21 are cytoplasmic; the sequence is MKVLCEDVNGPRSSLGRAWSH. Residues 22-38 traverse the membrane as a helical segment; it reads MSWLYYQYLLVTALYML. At 39–43 the chain is on the lumenal side; the sequence is EPWER. A helical membrane pass occupies residues 44-66; sequence TVFNSMLVSIVGMALYTGYIFMP. Residues 67–80 are Cytoplasmic-facing; it reads QHILAILHYFEIVQ.

It belongs to the SPTSS family. SPTSSA subfamily. As to quaternary structure, component of the serine palmitoyltransferase (SPT) complex, which is composed of SPTLC1, SPTLC2 or SPTLC3 and SPTSSA or SPTSSB. The heterodimer consisting of SPTLC1 and SPTLC2/SPTLC3 forms the catalytic core of the enzyme, while SPTSSA or SPTSSB subunits determine substrate specificity. SPT also interacts with ORMDL proteins, especially ORMDL3, which negatively regulate SPT activity in the presence of ceramides.

Its subcellular location is the endoplasmic reticulum membrane. The protein operates within lipid metabolism; sphingolipid metabolism. Its function is as follows. Component of the serine palmitoyltransferase multisubunit enzyme (SPT) that catalyzes the initial and rate-limiting step in sphingolipid biosynthesis by condensing L-serine and activated acyl-CoA (most commonly palmitoyl-CoA) to form long-chain bases. The SPT complex is composed of SPTLC1, SPTLC2 or SPTLC3 and SPTSSA or SPTSSB. Within this complex, the heterodimer consisting of SPTLC1 and SPTLC2/SPTLC3 forms the catalytic core. Within the SPT complex, SPTSSA stimulates the catalytic activity and plays a role in substrate specificity, which depends upon the overall complex composition. The SPTLC1-SPTLC2-SPTSSA complex shows a strong preference for C16-CoA substrate, while the SPTLC1-SPTLC3-SPTSSA isozyme uses both C14-CoA and C16-CoA as substrates, with a slight preference for C14-CoA. Independently of its action as a SPT component, may be involved in MBOAT7 localization to mitochondria-associated membranes, a membrane bridge between the endoplasmic reticulum and mitochondria, may hence affect MBOAT7-catalyzed incorporation of arachidonic acid into phosphatidylinositol. The polypeptide is Serine palmitoyltransferase small subunit A-A (sptssa-a) (Xenopus laevis (African clawed frog)).